Consider the following 277-residue polypeptide: MTPRPIRHQYEDLMRHVFEHGTAKGDRTGTGTKSVFGHQMRFDLSEGFPLVTTKKVHLKSIILELLWFLRGDSNVRWLQERGCTIWDEWARDDGSLGPVYGVQWRSWPTPDGGHIDQIQQVIDTLKTHPDSRRIIVSAWNVAELDRMALMPCHAFFQFYVAPSQVAGEPGKLSCQLYQRSADIFLGVPFNIASYALLTHMVAQQCDLQVGDFIWTGGDCHIYSNHFEQVRTQLARQPYAYPTLQIKRRPASIFDYAYEDFEVVGYEHHPAIKAPVAV.

A dUMP-binding site is contributed by arginine 27. Residue histidine 57 participates in (6R)-5,10-methylene-5,6,7,8-tetrahydrofolate binding. DUMP is bound at residue 132 to 133 (RR). The active-site Nucleophile is cysteine 152. DUMP is bound by residues 179 to 182 (RSAD), asparagine 190, and 220 to 222 (HIY). Aspartate 182 is a binding site for (6R)-5,10-methylene-5,6,7,8-tetrahydrofolate. Residue alanine 276 participates in (6R)-5,10-methylene-5,6,7,8-tetrahydrofolate binding.

Belongs to the thymidylate synthase family. Bacterial-type ThyA subfamily. In terms of assembly, homodimer.

Its subcellular location is the cytoplasm. It carries out the reaction dUMP + (6R)-5,10-methylene-5,6,7,8-tetrahydrofolate = 7,8-dihydrofolate + dTMP. The protein operates within pyrimidine metabolism; dTTP biosynthesis. In terms of biological role, catalyzes the reductive methylation of 2'-deoxyuridine-5'-monophosphate (dUMP) to 2'-deoxythymidine-5'-monophosphate (dTMP) while utilizing 5,10-methylenetetrahydrofolate (mTHF) as the methyl donor and reductant in the reaction, yielding dihydrofolate (DHF) as a by-product. This enzymatic reaction provides an intracellular de novo source of dTMP, an essential precursor for DNA biosynthesis. This is Thymidylate synthase from Acidovorax sp. (strain JS42).